Here is a 973-residue protein sequence, read N- to C-terminus: Leucine--tRNA ligase, chloroplastic/mitochondrial (973 aa).

The 'HIGH' region motif lies at 126–135 (PSGAGLHVGH). A 'KMSKS' region motif is present at residues 730-734 (KMSKS). Lys733 is an ATP binding site.

This sequence belongs to the class-I aminoacyl-tRNA synthetase family.

The protein resides in the plastid. It is found in the chloroplast. Its subcellular location is the mitochondrion. The catalysed reaction is tRNA(Leu) + L-leucine + ATP = L-leucyl-tRNA(Leu) + AMP + diphosphate. Catalyzes the specific attachment of an amino acid to its cognate tRNA in a two step reaction: the amino acid (AA) is first activated by ATP to form AA-AMP and then transferred to the acceptor end of the tRNA. The sequence is that of Leucine--tRNA ligase, chloroplastic/mitochondrial from Arabidopsis thaliana (Mouse-ear cress).